Consider the following 172-residue polypeptide: C-phycocyanin beta chain (172 aa).

At N72 the chain carries N4-methylasparagine. 2 residues coordinate (2R,3E)-phycocyanobilin: C82 and C153.

It belongs to the phycobiliprotein family. In terms of assembly, heterodimer of an alpha and a beta subunit, which further assembles into trimers and the trimers into hexamers. The basic functional unit of phycobiliproteins is a ring-shaped hexamer formed from two back-to-back trimers contacting via the alpha chain subunits. The trimers are composed of alpha/beta subunit heterodimers arranged around a three-fold axis of symmetry. The phycoerythrins also contain a gamma subunit which is located in the center of the hexamer. Post-translationally, contains two covalently linked bilin chromophores.

The protein localises to the plastid. The protein resides in the chloroplast thylakoid membrane. Light-harvesting photosynthetic bile pigment-protein from the phycobiliprotein complex (phycobilisome, PBS). Phycocyanin is the major phycobiliprotein in the PBS rod. The chain is C-phycocyanin beta chain (cpcB) from Porphyra purpurea (Red seaweed).